Here is a 230-residue protein sequence, read N- to C-terminus: Orotidine 5'-phosphate decarboxylase (230 aa).

Residues Asp-8, Lys-30, Asp-59–Thr-68, Thr-118, Arg-178, Gln-187, Gly-207, and Arg-208 contribute to the substrate site. The Proton donor role is filled by Lys-61.

Belongs to the OMP decarboxylase family. Type 1 subfamily. Homodimer.

It carries out the reaction orotidine 5'-phosphate + H(+) = UMP + CO2. Its pathway is pyrimidine metabolism; UMP biosynthesis via de novo pathway; UMP from orotate: step 2/2. Catalyzes the decarboxylation of orotidine 5'-monophosphate (OMP) to uridine 5'-monophosphate (UMP). This is Orotidine 5'-phosphate decarboxylase from Sulfurovum sp. (strain NBC37-1).